The following is a 429-amino-acid chain: Dihydroorotase (429 aa).

Zn(2+) is bound by residues H59 and H61. Residues 61–63 (HLR) and N93 contribute to the substrate site. 4 residues coordinate Zn(2+): K143, H171, H229, and D298. K143 carries the post-translational modification N6-carboxylysine. D298 is an active-site residue. Substrate is bound by residues H302 and 316–317 (AG).

The protein belongs to the metallo-dependent hydrolases superfamily. DHOase family. Class I DHOase subfamily. The cofactor is Zn(2+).

It catalyses the reaction (S)-dihydroorotate + H2O = N-carbamoyl-L-aspartate + H(+). It functions in the pathway pyrimidine metabolism; UMP biosynthesis via de novo pathway; (S)-dihydroorotate from bicarbonate: step 3/3. In terms of biological role, catalyzes the reversible cyclization of carbamoyl aspartate to dihydroorotate. This chain is Dihydroorotase, found in Methanosphaera stadtmanae (strain ATCC 43021 / DSM 3091 / JCM 11832 / MCB-3).